A 5478-amino-acid polypeptide reads, in one-letter code: Mucin-12 (5478 aa).

The signal sequence occupies residues 1–16 (MLVIWILTLALRLCAS). The Extracellular portion of the chain corresponds to 17–5380 (VTTVTPEGSA…EFNIAKSLVY (5364 aa)). N-linked (GlcNAc...) asparagine glycosylation is found at Asn-154, Asn-170, and Asn-176. The segment at 212 to 737 (LDSSTNSGHS…GSTETTLLPD (526 aa)) is disordered. Repeat unit 1 spans residues 222–240 (EESTVSHSGPGATGTTLFP). Residues 222-4761 (EESTVSHSGP…PGSTQTMHFP (4540 aa)) form a 28 X 19 AA approximate tandem repeats of E-E-S-X-X-X-H-X-X-P-X-X-T-X-T-X-X-X-P region. Composition is skewed to polar residues over residues 226-246 (VSHS…SATS), 255-288 (SPIT…SSPR), 296-313 (PART…TSHS), and 325-342 (DSTT…SHSI). Positions 343-366 (PGSTDTTLSPGTTTPSSLGPESTT) are enriched in low complexity. The segment covering 367–387 (FHSSPGYTKTTRLPDNTTTSG) has biased composition (polar residues). Residue Asn-382 is glycosylated (N-linked (GlcNAc...) asparagine). Residues 396 to 413 (HSSTGSPHTTLSPSSSTT) are compositionally biased toward low complexity. Positions 419–440 (TTFQSWPSSKDTSPAPSGTTSA) are enriched in polar residues. 2 stretches are compositionally biased toward low complexity: residues 445–466 (STTY…SSTT) and 478–495 (SSPV…SATS). A run of 2 repeats spans residues 471-489 (EEST…TPPP) and 499-517 (EEST…MHFP). Residues 531–554 (TFHGSTTHTKSSTPSTTAALAHTS) are compositionally biased toward low complexity. 2 stretches are compositionally biased toward polar residues: residues 555-575 (YHSS…TISG) and 608-648 (STPS…SPDT). A compositionally biased stretch (low complexity) spans 654 to 669 (SMTSSGVSEESTTSHS). The stretch at 662 to 680 (EESTTSHSRPGSTHTTAFP) is repeat 4. 2 stretches are compositionally biased toward polar residues: residues 670–715 (RPGS…TASS) and 722–737 (TFHS…LLPD). Asn-738 carries an N-linked (GlcNAc...) asparagine glycan. Disordered stretches follow at residues 749–4847 (MPVH…HFTT), 4887–5034 (SSRS…THTV), 5048–5071 (STAF…TASD), and 5093–5112 (ASSS…TSPS). Polar residues-rich tracts occupy residues 751–783 (VHSS…WPSS) and 792–842 (TTTS…TQTM). Copy 5 of the repeat occupies 827 to 845 (EESTTYHSSPGSTQTMHFP). Over residues 859 to 877 (TSHSSTTHTISSAPSTTSA) the composition is skewed to low complexity. Polar residues-rich tracts occupy residues 884-899 (SYHS…HFPD) and 928-970 (RSTT…TTFH). The span at 971 to 1007 (SSPRSPATTLSPASTTSSGVSEESTTSRSRPGSTHTT) shows a compositional bias: low complexity. Polar residues predominate over residues 1009-1021 (FPDSTTTPGLSRH). Residues 1022 to 1065 (STTSHSSPGSTDTTLLPASTTTSGPSQESTTSHSSSGSTDTALS) are compositionally biased toward low complexity. Polar residues-rich tracts occupy residues 1066–1101 (PGST…TSSG) and 1108–1138 (RVHS…TAFQ). Positions 1139 to 1157 (THPASTHTTPSPPSTATAP) are enriched in low complexity. The stretch at 1159-1177 (EESTTYHRSPGSTPTTHFP) is repeat 6. Composition is skewed to polar residues over residues 1160 to 1184 (ESTT…TTSG) and 1191 to 1207 (IFHS…SSAH). 3 stretches are compositionally biased toward low complexity: residues 1208 to 1220 (STTS…TTSR), 1229 to 1241 (TTLP…PGLS), and 1249 to 1262 (SSPR…SPAS). Polar residues-rich tracts occupy residues 1271 to 1324 (ESTT…TTSV), 1331 to 1357 (TFHS…TEES), and 1364 to 1377 (PAST…TLTT). Low complexity-rich tracts occupy residues 1384 to 1396 (STTF…STGT) and 1411 to 1438 (ESTP…SLSE). Over residues 1439–1448 (KSTTFYTSPR) the composition is skewed to polar residues. Low complexity predominate over residues 1458-1481 (TTTSSGVSEESSTSHSQPGSTHTT). The stretch at 1466 to 1484 (EESSTSHSQPGSTHTTAFP) is repeat 7. Over residues 1483 to 1537 (FPDSTTTSDLSQEPTTSHSSQGSTEATLSPGSTTASSLGQQSTTFHSSPGDTETT) the composition is skewed to polar residues. Over residues 1552–1568 (STPTHSSTGSLHTTLTP) the composition is skewed to low complexity. Composition is skewed to polar residues over residues 1569-1586 (ASST…FQSW) and 1606-1630 (VSTT…TTLG). The stretch at 1633–1651 (EESTTVHSSPGATGTALFP) is repeat 8. Polar residues predominate over residues 1653-1708 (RSATSVLVGEPTTSPISSGSTETTALPGSTTTAGLSEKSTTFYSSPRSPDTTLSPA). Over residues 1709 to 1724 (STTSSGVSEESTTSHS) the composition is skewed to low complexity. Repeat unit 9 spans residues 1717–1735 (EESTTSHSRPGSTHTTAFP). Polar residues-rich tracts occupy residues 1725-1797 (RPGS…TTAS) and 1805-1840 (PVHS…SSKD). N-linked (GlcNAc...) asparagine glycosylation occurs at Asn-1793. Composition is skewed to low complexity over residues 1856-1877 (STTS…SSTT) and 1889-1906 (SSPV…STTS). 2 tandem repeats follow at residues 1882 to 1900 (EEST…TPSP) and 1910 to 1928 (EEST…MHFP). The segment covering 1914 to 1935 (AYHSSPGSTQTMHFPESSTASG) has biased composition (polar residues). Low complexity predominate over residues 1943–1959 (SHSSTTHTISSPPSTTS). Polar residues-rich tracts occupy residues 1967-1982 (SYHS…HFPD) and 2011-2053 (RSTT…TTFH). Residues 2054 to 2082 (SSPRSPATTLSPASTTSSGVSEESTTSHS) are compositionally biased toward low complexity. Residues 2075-2093 (EESTTSHSRPGSTHTTAFP) form repeat 12. A compositionally biased stretch (polar residues) spans 2083–2104 (RPGSTHTTAFPDSTTTPGLSRH). Residues 2105–2130 (STTSHSSPGSTDTTLLPASTTTSGPS) show a composition bias toward low complexity. 2 stretches are compositionally biased toward polar residues: residues 2131–2184 (QEST…TSSG) and 2191–2221 (RVHS…TAFQ). The segment covering 2222-2240 (THPASTHTTPSPPSTATAP) has biased composition (low complexity). Repeat 13 spans residues 2242–2260 (EESTTYHRSPGSTPTTHFP). Composition is skewed to polar residues over residues 2243-2267 (ESTT…TTSG) and 2274-2290 (IFHS…SSAH). 3 stretches are compositionally biased toward low complexity: residues 2291-2303 (STTS…TTSR), 2312-2324 (TTLP…PGLS), and 2332-2345 (SSPR…SPAS). The segment covering 2354–2392 (ESTTSRSQPGSTHSTVSPASTTTPGLSEESTTVYSSSPG) has biased composition (polar residues). The segment covering 2393–2407 (STETTVFPRTPTTSV) has biased composition (low complexity). 2 stretches are compositionally biased toward polar residues: residues 2414–2440 (TFHS…TEES) and 2447–2460 (PAST…TLTT). Low complexity-rich tracts occupy residues 2467–2483 (STTF…TLSP) and 2494–2521 (ESTP…SLSE). Over residues 2522–2531 (KSTTFYTSPR) the composition is skewed to polar residues. Over residues 2541 to 2564 (TTTSSGVSEESSTSHSQPGSTHTT) the composition is skewed to low complexity. Copy 14 of the repeat occupies 2549–2567 (EESSTSHSQPGSTHTTAFP). Polar residues predominate over residues 2566–2578 (FPDSTTTPGLSRH). Over residues 2579-2604 (STTSHSSPGSTDTTLLPASTTTSGPS) the composition is skewed to low complexity. Polar residues-rich tracts occupy residues 2605–2658 (QEST…TSSG) and 2665–2695 (RVHS…TTFQ). Low complexity predominate over residues 2696 to 2714 (THPASTHTTPSPPSTATAP). Residues 2716-2734 (EESTTYHRSPGSTPTTHFP) form repeat 15. Polar residues-rich tracts occupy residues 2717 to 2741 (ESTT…TTSG) and 2748 to 2764 (IFHS…SSAH). 3 stretches are compositionally biased toward low complexity: residues 2765-2777 (STTS…TTSR), 2786-2798 (TTLP…PGLS), and 2806-2819 (SSPR…SPAS). 3 stretches are compositionally biased toward polar residues: residues 2828–2881 (ESTT…TTSV), 2888–2914 (TFHS…TEES), and 2921–2934 (PAST…TLTT). Composition is skewed to low complexity over residues 2941-2957 (STTF…TLSP) and 2968-2995 (ESTP…SLSE). The segment covering 2996-3005 (KSTTFYTSPR) has biased composition (polar residues). Positions 3015–3038 (TTTSSGVSEESSTSHSQPGSTHTT) are enriched in low complexity. Repeat unit 16 spans residues 3023–3041 (EESSTSHSQPGSTHTTAFP). The span at 3040 to 3094 (FPDSTTTSGLSQEPTASHSSQGSTEATLSPGSTTASSLGQQSTTFHSSPGDTETT) shows a compositional bias: polar residues. Over residues 3109 to 3125 (STPTHSSTGSLHTTLTP) the composition is skewed to low complexity. Composition is skewed to polar residues over residues 3126-3143 (ASST…FQSW) and 3163-3187 (VSTT…TTLG). Copy 17 of the repeat occupies 3190–3208 (EESTTVHSSPGATGTALFP). Residues 3210-3265 (RSATSVLVGEPTTSPISSGSTETTALPGSTTTAGLSEKSTTFYSSPRSPDTTLSPA) are compositionally biased toward polar residues. A compositionally biased stretch (low complexity) spans 3266–3281 (STTSSGVSEESTTSHS). Residues 3274–3292 (EESTTSHSRPGSTHTTAFP) form repeat 18. Composition is skewed to polar residues over residues 3282–3354 (RPGS…TTAS) and 3362–3397 (PVHS…NSKD). An N-linked (GlcNAc...) asparagine glycan is attached at Asn-3350. Composition is skewed to low complexity over residues 3413–3434 (STTS…SSTT) and 3446–3463 (SSPV…STTS). 2 repeat units span residues 3439 to 3457 (EEST…TPSP) and 3467 to 3485 (EEST…MHFP). Polar residues predominate over residues 3468-3482 (ESTTYHSSPGSTQTM). Residues 3499–3517 (TSHSSTTHTISSAPSTTSA) show a composition bias toward low complexity. Polar residues-rich tracts occupy residues 3524 to 3539 (SYHS…HFPD) and 3568 to 3610 (RSTT…TTFH). Low complexity predominate over residues 3611–3639 (SSPRSPATTLSPASTTSSGVSEESTTSHS). Repeat unit 21 spans residues 3632–3650 (EESTTSHSRPGSTHTTAFP). Positions 3640 to 3661 (RPGSTHTTAFPDSTTTPGLSRH) are enriched in polar residues. Residues 3662–3705 (STTSHSSPGSTDTTLLPASTTTSGSSQESTTSHSSSGSTDTALS) show a composition bias toward low complexity. Polar residues-rich tracts occupy residues 3706-3741 (PGST…TSSG) and 3748-3778 (RVHS…TAFQ). Residues 3779 to 3797 (THPASTHTTPSPPSTATAP) are compositionally biased toward low complexity. Residues 3799-3817 (EESTTYHRSPGSTPTTHFP) form repeat 22. Composition is skewed to polar residues over residues 3800-3824 (ESTT…TTSG) and 3831-3847 (IFHS…SSAH). 3 stretches are compositionally biased toward low complexity: residues 3848–3860 (STTS…TTSR), 3869–3881 (TTLP…PGLS), and 3889–3902 (SSPR…SPAS). Composition is skewed to polar residues over residues 3911 to 3963 (ESTT…TTTS), 3971 to 3997 (TFHS…TEES), and 4004 to 4017 (PAST…TLTT). Low complexity-rich tracts occupy residues 4024 to 4036 (STTF…STGT) and 4051 to 4078 (ESTP…SLSE). Residues 4079–4088 (KSTTFYTSPR) show a composition bias toward polar residues. Residues 4098–4121 (TTTSSGVSEESSTSHSQPGSTHTT) are compositionally biased toward low complexity. Residues 4106-4124 (EESSTSHSQPGSTHTTAFP) form repeat 23. Over residues 4123–4177 (FPDSTTTSGLSQEPTTSHSSQGSTEATLSPGSTTASSLGQQSTTFHSSPGDTETT) the composition is skewed to polar residues. Low complexity predominate over residues 4192-4208 (STPTHSSTGSLHTTLTP). The span at 4209-4226 (ASSTSTGLQEESTTFQSW) shows a compositional bias: polar residues. Residues 4227–4249 (PSSSDTTPSPPSTTAVPVEVSTT) are compositionally biased toward low complexity. Over residues 4250-4270 (YHSRPSSTPTTHFSASSTTLG) the composition is skewed to polar residues. The stretch at 4273-4291 (EESTTVHSSPGATGTALFP) is repeat 24. Polar residues predominate over residues 4293–4348 (RSATSVLVGEPTTSPISSGSTETTALPGSTTTAGLSEKSTTFYSSPRSPDTTLSPA). Low complexity predominate over residues 4349–4364 (STTSSGVSEESTTSHS). 2 stretches are compositionally biased toward polar residues: residues 4369–4437 (MHTT…TTAS) and 4445–4480 (PVHS…NSKD). Residue Asn-4433 is glycosylated (N-linked (GlcNAc...) asparagine). Composition is skewed to low complexity over residues 4496–4517 (STTS…SSTT) and 4529–4546 (SSPV…STTS). Tandem repeats lie at residues 4522–4540 (EEST…TPSP) and 4550–4568 (EEST…MHFP). The segment covering 4551–4571 (ESTTYHSSPGSTQTMHFPESN) has biased composition (polar residues). Asn-4571 carries N-linked (GlcNAc...) asparagine glycosylation. The segment covering 4582 to 4600 (TSHSSTTHTISSAPSTTSA) has biased composition (low complexity). 2 stretches are compositionally biased toward polar residues: residues 4607-4622 (SYHS…HFPD) and 4651-4688 (RSTT…LSEK). Low complexity-rich tracts occupy residues 4689–4710 (STTF…SSTT) and 4722–4739 (SSPV…STTS). 2 consecutive repeat copies span residues 4715–4733 (EEST…TPSP) and 4743–4761 (EEST…MHFP). Residues 4747–4768 (AYHSSPGSTQTMHFPESSTASG) are compositionally biased toward polar residues. Positions 4776-4792 (SHSSTTHTISSPPSTTS) are enriched in low complexity. Composition is skewed to polar residues over residues 4800–4814 (SYHS…THFP) and 4887–4917 (SSRS…SQAE). Residues 4918 to 4931 (STHTTAFPASTTTS) are compositionally biased toward low complexity. 2 stretches are compositionally biased toward polar residues: residues 4932-5024 (GLSQ…STPF) and 5048-5061 (STAF…TGTT). Residues 5094-5112 (SSSTSGLTEESTTFHTSPS) are compositionally biased toward low complexity. The 39-residue stretch at 5116–5154 (TIVSTESLETLAPGLCQEGQIWNGKQCVCPQGYVGYQCL) folds into the EGF-like domain. Cys-5144 and Cys-5153 are joined by a disulfide. The SEA domain maps to 5168 to 5275 (LNATLGMTVK…TRTTLLDPDS (108 aa)). N-linked (GlcNAc...) asparagine glycans are attached at residues Asn-5169, Asn-5182, Asn-5197, Asn-5228, and Asn-5264. The Cleavage motif signature appears at 5226-5233 (LLNGSIVV). Residues 5381 to 5401 (GIVGAVMAVLLLALIILIILF) traverse the membrane as a helical segment. Residues 5402–5478 (SLSQRKRHRE…QRPEMVASTV (77 aa)) are Cytoplasmic-facing.

As to expression, ubiquitous, with higher expression in colon. Down-regulated in colorectal cancer as well as in the colon of patients with ulcerative colitis (UC) and Crohn's disease (CD).

It localises to the membrane. Its function is as follows. Involved in epithelial cell protection, adhesion modulation, and signaling. May be involved in epithelial cell growth regulation. Stimulated by both cytokine TNF-alpha and TGF-beta in intestinal epithelium. The chain is Mucin-12 (MUC12) from Homo sapiens (Human).